The sequence spans 393 residues: UDP-N-acetylglucosamine--N-acetylmuramyl-(pentapeptide) pyrophosphoryl-undecaprenol N-acetylglucosamine transferase (393 aa).

Residues 15–17 (TAG), asparagine 129, arginine 171, serine 211, and glutamine 322 contribute to the UDP-N-acetyl-alpha-D-glucosamine site.

It belongs to the glycosyltransferase 28 family. MurG subfamily.

Its subcellular location is the cell membrane. It carries out the reaction di-trans,octa-cis-undecaprenyl diphospho-N-acetyl-alpha-D-muramoyl-L-alanyl-D-glutamyl-meso-2,6-diaminopimeloyl-D-alanyl-D-alanine + UDP-N-acetyl-alpha-D-glucosamine = di-trans,octa-cis-undecaprenyl diphospho-[N-acetyl-alpha-D-glucosaminyl-(1-&gt;4)]-N-acetyl-alpha-D-muramoyl-L-alanyl-D-glutamyl-meso-2,6-diaminopimeloyl-D-alanyl-D-alanine + UDP + H(+). It participates in cell wall biogenesis; peptidoglycan biosynthesis. Functionally, cell wall formation. Catalyzes the transfer of a GlcNAc subunit on undecaprenyl-pyrophosphoryl-MurNAc-pentapeptide (lipid intermediate I) to form undecaprenyl-pyrophosphoryl-MurNAc-(pentapeptide)GlcNAc (lipid intermediate II). The polypeptide is UDP-N-acetylglucosamine--N-acetylmuramyl-(pentapeptide) pyrophosphoryl-undecaprenol N-acetylglucosamine transferase (Bifidobacterium longum (strain DJO10A)).